We begin with the raw amino-acid sequence, 164 residues long: MKSVITTTISAADAAGRFPSSSDLESVQGNIQRAAARLEAAEKLASNHEAVVKEAGDACFAKYSYLKNPGEAGDSQEKVNKCYRDVDHYMRLVNYCLVVGGTGPVDEWGIAGAREVYRTLNLPTSAYVASFAFARDRLCVPRDMSAQAGVEYAGNLDYIINSLC.

(2R,3E)-phycoerythrobilin is bound by residues C82 and C139.

The protein belongs to the phycobiliprotein family. As to quaternary structure, heterodimer of an alpha and a beta chain. Contains two covalently linked bilin chromophores.

The protein localises to the plastid. The protein resides in the chloroplast thylakoid membrane. Light-harvesting photosynthetic bile pigment-protein from the phycobiliprotein complex. In Porphyra purpurea (Red seaweed), this protein is R-phycoerythrin alpha chain (cpeA).